We begin with the raw amino-acid sequence, 561 residues long: Arginine--tRNA ligase (561 aa).

A 'HIGH' region motif is present at residues 136–146; it reads ANPTGLLHMGN.

Belongs to the class-I aminoacyl-tRNA synthetase family. As to quaternary structure, monomer.

It is found in the cytoplasm. It catalyses the reaction tRNA(Arg) + L-arginine + ATP = L-arginyl-tRNA(Arg) + AMP + diphosphate. The protein is Arginine--tRNA ligase of Desulforamulus reducens (strain ATCC BAA-1160 / DSM 100696 / MI-1) (Desulfotomaculum reducens).